Reading from the N-terminus, the 100-residue chain is Small ribosomal subunit protein uS14c (100 aa).

The protein belongs to the universal ribosomal protein uS14 family. Part of the 30S ribosomal subunit.

The protein localises to the plastid. It is found in the chloroplast. Binds 16S rRNA, required for the assembly of 30S particles. This Anthoceros angustus (Hornwort) protein is Small ribosomal subunit protein uS14c.